The following is a 725-amino-acid chain: MPPTVIAEPVASGAHASYSGGPGETDYHALNAMLNLYDADGKIQFDKDREAAHQYFLQHVNQNTVFFHNQDEKLDYLIRENYYEREVLDQYSRNFVKTLLDRAYAKKFRFPTFLGAFKYYTSYTLKTFDGKRYLERFEDRVVMVALTLAAGDTALAELLVDEIIDGRFQPATPTFLNSGKKQRGEPVSCFLLRVEDNMESIGRSINSALQLSKRGGGVALLLTNIREHGAPIKNIENQSSGVIPIMKLLEDAFSYANQLGARQGAGAVYLHAHHPDIYRFLDTKRENADEKIRIKTLSLGVVIPDITFELAKRNDDMYLFSPYDVERVYGVPFADISVTEKYYEMVDDARIRKTKIKAREFFQTLAELQFESGYPYIMFEDTVNRANPIDGKITHSNLCSEILQVSTPSLFNEDLSYAKVGKDISCNLGSLNIAKTMDSPDFAQTIEVAIRALTAVSDQTHIKSVPSIEQGNNDSHAIGLGQMNLHGYLARERIFYGSDEGIDFTNIYFYTVLYHALRASNRIAIERGTHFKGFERSKYASGEFFDKYTDQIWEPKTQKVRQLFADAGIRIPTQDDWRRLKESVQAHGIYNQNLQAVPPTGSISYINHSTSSIHPIVSKVEIRKEGKIGRVYYPAPYMTNDNLEYYEDAYEIGYEKIIDTYAAATQHVDQGLSLTLFFKDTATTRDVNKAQIYAWRKGIKTLYYIRLRQMALEGTEVEGCVSCML.

Substrate contacts are provided by residues Thr-172, 188–189, Gly-217, 397–401, and 599–603; these read SC, NLCSE, and PTGSI. A disulfide bridge connects residues Cys-189 and Cys-426. Asn-397 serves as the catalytic Proton acceptor. Cys-399 serves as the catalytic Cysteine radical intermediate. Residue Glu-401 is the Proton acceptor of the active site.

It belongs to the ribonucleoside diphosphate reductase large chain family. Tetramer of two alpha and two beta subunits. Co-immunoprecipitates with DarG in the presence and absence of darT.

The enzyme catalyses a 2'-deoxyribonucleoside 5'-diphosphate + [thioredoxin]-disulfide + H2O = a ribonucleoside 5'-diphosphate + [thioredoxin]-dithiol. Under complex allosteric control mediated by deoxynucleoside triphosphates and ATP binding. The type of nucleotide bound at the specificity site determines substrate preference. It seems probable that ATP makes the enzyme reduce CDP and UDP, dGTP favors ADP reduction and dTTP favors GDP reduction. CDP reduction is stimulated by dATP. Functionally, provides the precursors necessary for DNA synthesis. Catalyzes the biosynthesis of deoxyribonucleotides from the corresponding ribonucleotides. When coexpressed in E.coli with nrdF2 the 2 proteins complement a temperature-sensitive E.coli mutant, however coexpression with nrdF1 does not complement. This chain is Ribonucleoside-diphosphate reductase subunit alpha (nrdE), found in Mycobacterium tuberculosis (strain ATCC 25618 / H37Rv).